An 89-amino-acid polypeptide reads, in one-letter code: Small ribosomal subunit protein uS15 (89 aa).

The protein belongs to the universal ribosomal protein uS15 family. Part of the 30S ribosomal subunit. Forms a bridge to the 50S subunit in the 70S ribosome, contacting the 23S rRNA.

One of the primary rRNA binding proteins, it binds directly to 16S rRNA where it helps nucleate assembly of the platform of the 30S subunit by binding and bridging several RNA helices of the 16S rRNA. Its function is as follows. Forms an intersubunit bridge (bridge B4) with the 23S rRNA of the 50S subunit in the ribosome. The protein is Small ribosomal subunit protein uS15 of Mesorhizobium japonicum (strain LMG 29417 / CECT 9101 / MAFF 303099) (Mesorhizobium loti (strain MAFF 303099)).